The following is a 323-amino-acid chain: Protein translocase subunit SecF (323 aa).

Transmembrane regions (helical) follow at residues 19-39 (GVIVSAILALLALGLLFFKGF), 138-158 (ILSLILALIAIMVYVSFRYEW), 162-182 (LASVIALVHDVILVASSVIVF), 189-209 (EVIAALLTLIGYSINDTIIIF), 244-264 (LTVFFVVLILCVFGSKIIIGF), and 269-289 (LIGTIVGTYSSIFIAPKVALL).

Belongs to the SecD/SecF family. SecF subfamily. Forms a complex with SecD. Part of the essential Sec protein translocation apparatus which comprises SecA, SecYEG and auxiliary proteins SecDF-YajC and YidC.

It is found in the cell inner membrane. Functionally, part of the Sec protein translocase complex. Interacts with the SecYEG preprotein conducting channel. SecDF uses the proton motive force (PMF) to complete protein translocation after the ATP-dependent function of SecA. The polypeptide is Protein translocase subunit SecF (Helicobacter pylori (strain ATCC 700392 / 26695) (Campylobacter pylori)).